The primary structure comprises 381 residues: Dual-specificity RNA methyltransferase RlmN (381 aa).

Residue glutamate 96 is the Proton acceptor of the active site. The 241-residue stretch at 102-342 folds into the Radical SAM core domain; sequence TDDRGTLCVS…TRTTRGDDID (241 aa). Cysteine 109 and cysteine 345 are oxidised to a cystine. [4Fe-4S] cluster-binding residues include cysteine 116, cysteine 120, and cysteine 123. S-adenosyl-L-methionine contacts are provided by residues 170–171, serine 202, 224–226, and asparagine 302; these read GE and SLH. Cysteine 345 functions as the S-methylcysteine intermediate in the catalytic mechanism.

Belongs to the radical SAM superfamily. RlmN family. The cofactor is [4Fe-4S] cluster.

It localises to the cytoplasm. The catalysed reaction is adenosine(2503) in 23S rRNA + 2 reduced [2Fe-2S]-[ferredoxin] + 2 S-adenosyl-L-methionine = 2-methyladenosine(2503) in 23S rRNA + 5'-deoxyadenosine + L-methionine + 2 oxidized [2Fe-2S]-[ferredoxin] + S-adenosyl-L-homocysteine. The enzyme catalyses adenosine(37) in tRNA + 2 reduced [2Fe-2S]-[ferredoxin] + 2 S-adenosyl-L-methionine = 2-methyladenosine(37) in tRNA + 5'-deoxyadenosine + L-methionine + 2 oxidized [2Fe-2S]-[ferredoxin] + S-adenosyl-L-homocysteine. Its function is as follows. Specifically methylates position 2 of adenine 2503 in 23S rRNA and position 2 of adenine 37 in tRNAs. m2A2503 modification seems to play a crucial role in the proofreading step occurring at the peptidyl transferase center and thus would serve to optimize ribosomal fidelity. The protein is Dual-specificity RNA methyltransferase RlmN of Pseudomonas putida (strain GB-1).